We begin with the raw amino-acid sequence, 131 residues long: Small nuclear ribonucleoprotein SmD3b (131 aa).

A Sm domain is found at 7 to 79; the sequence is IPVKLLHEAS…VRFMVIPDIL (73 aa). The tract at residues 96–131 is disordered; sequence SSSLGVGRGRGAMRGKPAAGPGRGTGGRGAVPPVRR.

This sequence belongs to the snRNP core protein family. In terms of tissue distribution, expressed in young seedlings, roots, leaves, flowers and immature siliques.

It is found in the cytoplasm. The protein resides in the cytosol. It localises to the nucleus. Functionally, core component of the spliceosomal U1, U2, U4 and U5 small nuclear ribonucleoproteins (snRNPs), the building blocks of the spliceosome. May play a major role in the splicing of cellular pre-mRNAs. Required for normal plant development. This chain is Small nuclear ribonucleoprotein SmD3b, found in Arabidopsis thaliana (Mouse-ear cress).